The chain runs to 379 residues: Probable pectin lyase A (379 aa).

An N-terminal signal peptide occupies residues 1–19; sequence MKFALLSGVAAGLLPVVSA. 2 cysteine pairs are disulfide-bonded: Cys-82–Cys-101 and Cys-91–Cys-225. Arg-255 is an active-site residue. Cys-322 and Cys-330 are joined by a disulfide.

This sequence belongs to the polysaccharide lyase 1 family.

It is found in the secreted. The enzyme catalyses Eliminative cleavage of (1-&gt;4)-alpha-D-galacturonan methyl ester to give oligosaccharides with 4-deoxy-6-O-methyl-alpha-D-galact-4-enuronosyl groups at their non-reducing ends.. Its function is as follows. Pectinolytic enzymes consist of four classes of enzymes: pectin lyase, polygalacturonase, pectin methylesterase and rhamnogalacturonase. Among pectinolytic enzymes, pectin lyase is the most important in depolymerization of pectin, since it cleaves internal glycosidic bonds of highly methylated pectins. This chain is Probable pectin lyase A (pelA), found in Aspergillus oryzae (strain ATCC 42149 / RIB 40) (Yellow koji mold).